Consider the following 504-residue polypeptide: Cytochrome P450 4A25 (504 aa).

2 consecutive transmembrane segments (helical) span residues 6-26 (LASASGLLQVASLLGLLLLLL) and 110-130 (APVLYRLLIPWIGCGLLLLNG). Cys451 serves as a coordination point for heme.

The protein belongs to the cytochrome P450 family. Heme serves as cofactor.

Its subcellular location is the endoplasmic reticulum membrane. It carries out the reaction an omega-methyl-long-chain fatty acid + reduced [NADPH--hemoprotein reductase] + O2 = an omega-hydroxy-long-chain fatty acid + oxidized [NADPH--hemoprotein reductase] + H2O + H(+). Catalyzes the omega- and (omega-1)-hydroxylation of various fatty acids such as laurate and palmitate. Has no activity toward taurochenodeoxycholic acid. This is Cytochrome P450 4A25 (CYP4A25) from Sus scrofa (Pig).